The chain runs to 290 residues: Probable protein phosphatase 2C 62 (290 aa).

A PPM-type phosphatase domain is found at 38–288; the sequence is KHGYHLVKGK…DDISCIVVKF (251 aa). The Mn(2+) site is built by aspartate 75, glycine 76, aspartate 240, and aspartate 279.

The protein belongs to the PP2C family. Mg(2+) serves as cofactor. Requires Mn(2+) as cofactor.

It carries out the reaction O-phospho-L-seryl-[protein] + H2O = L-seryl-[protein] + phosphate. The enzyme catalyses O-phospho-L-threonyl-[protein] + H2O = L-threonyl-[protein] + phosphate. This Oryza sativa subsp. japonica (Rice) protein is Probable protein phosphatase 2C 62.